We begin with the raw amino-acid sequence, 640 residues long: 1-deoxy-D-xylulose-5-phosphate synthase (640 aa).

Residues His72 and 113-115 each bind thiamine diphosphate; that span reads GHA. Residue Asp144 participates in Mg(2+) binding. Thiamine diphosphate contacts are provided by residues 145-146, Asn174, Tyr287, and Glu370; that span reads GA. Asn174 provides a ligand contact to Mg(2+).

Belongs to the transketolase family. DXPS subfamily. As to quaternary structure, homodimer. It depends on Mg(2+) as a cofactor. Requires thiamine diphosphate as cofactor.

The catalysed reaction is D-glyceraldehyde 3-phosphate + pyruvate + H(+) = 1-deoxy-D-xylulose 5-phosphate + CO2. It functions in the pathway metabolic intermediate biosynthesis; 1-deoxy-D-xylulose 5-phosphate biosynthesis; 1-deoxy-D-xylulose 5-phosphate from D-glyceraldehyde 3-phosphate and pyruvate: step 1/1. In terms of biological role, catalyzes the acyloin condensation reaction between C atoms 2 and 3 of pyruvate and glyceraldehyde 3-phosphate to yield 1-deoxy-D-xylulose-5-phosphate (DXP). This chain is 1-deoxy-D-xylulose-5-phosphate synthase, found in Synechocystis sp. (strain ATCC 27184 / PCC 6803 / Kazusa).